Here is a 1369-residue protein sequence, read N- to C-terminus: ATP-dependent RNA helicase DHX29 (1369 aa).

2 disordered regions span residues 27 to 75 (SAEA…TNDS) and 176 to 226 (SQEF…KNME). Residues S71, S192, and S200 each carry the phosphoserine modification. Residues 189 to 201 (KFQSPQIQATISP) show a composition bias toward polar residues. Positions 208–226 (KTYEEDPKSKPKKEEKNME) are enriched in basic and acidic residues. Coiled-coil stretches lie at residues 222–256 (EKNMEVNMKEWILRYAEQQNEEEKNENSKSLEEEE), 283–310 (LEKNKQGQKEAQEKIRKFQREMETLEDH), and 492–519 (IAKLLNKLKQQQQQQQQHSENKRENSED). The segment at 502-526 (QQQQQQQHSENKRENSEDPEESWEN) is disordered. The Helicase ATP-binding domain occupies 582-755 (VETLKRHRVV…FTHCPILRIS (174 aa)). 595-602 (GETGSGKS) lines the ATP pocket. A DEAH box motif is present at residues 702 to 705 (DEVH). The Helicase C-terminal domain maps to 849–1026 (LILELLAYLD…ELCLHIMKCN (178 aa)).

Belongs to the DEAD box helicase family. DEAH subfamily. As to quaternary structure, part of the 43S pre-initiation complex (PIC) that contains at least Met-tRNA, EIF1, EIF1A (EIF1AX or EIF1AY), EIF2S1, EIF2S2, EIF2S3, EIF3A, EIF3B, EIF3C, EIF3D, EIF3E, EIF3F, EIF3G, EIF3H, EIF3I, EIF3J, EIF3K, EIF3L, EIF3M, DHX29 and the 40S ribosomal subunit.

The protein resides in the cytoplasm. It carries out the reaction ATP + H2O = ADP + phosphate + H(+). In terms of biological role, ATP-binding RNA helicase involved in translation initiation. Part of the 43S pre-initiation complex that is required for efficient initiation on mRNAs of higher eukaryotes with structured 5'-UTRs by promoting efficient NTPase-dependent 48S complex formation. Specifically binds to the 40S ribosome near the mRNA entrance. Does not possess a processive helicase activity. The sequence is that of ATP-dependent RNA helicase DHX29 from Homo sapiens (Human).